Reading from the N-terminus, the 188-residue chain is Protein SSX1 (188 aa).

Disordered stretches follow at residues 1-22 (MNGDDTFAKRPRDDAKASEKRS) and 111-188 (IMPK…EDDE). The region spanning 20 to 83 (KRSKAFDDIA…KQATDFQGND (64 aa)) is the KRAB-related domain. Residues 115-125 (KPAEDENDSKG) are compositionally biased toward basic and acidic residues. At Ser-123 the chain carries Phosphoserine. A compositionally biased stretch (basic residues) spans 153-170 (KRSGPKRGKHAWTHRLRE). Positions 179-188 (EISDPEEDDE) are enriched in acidic residues.

The protein belongs to the SSX family. As to expression, expressed at high level in the testis. Expressed at low level in thyroid. Not detected in tonsil, colon, lung, spleen, prostate, kidney, striated and smooth muscles. Detected in rhabdomyosarcoma and fibrosarcoma cell lines. Not detected in mesenchymal and epithelial cell lines. Expressed in testis.

It is found in the cytoplasm. The protein localises to the cytoskeleton. It localises to the flagellum axoneme. In terms of biological role, could act as a modulator of transcription. Plays a role in spermatogenesis. The polypeptide is Protein SSX1 (SSX1) (Homo sapiens (Human)).